Consider the following 236-residue polypeptide: CD81 antigen (236 aa).

Residues 1–12 (MGVEGCTKCIKY) lie on the Cytoplasmic side of the membrane. The chain crosses the membrane as a helical span at residues 13-33 (LLFVFNFVFWLAGGVILGVAL). Residues 34–63 (WLRHDPQTTNLLYLELGDRPAPNTFYVGIY) are Extracellular-facing. Residues 64 to 84 (ILIAVGAVMMFVGFLGCYGAI) form a helical membrane-spanning segment. Residues 85 to 89 (QESQC) lie on the Cytoplasmic side of the membrane. The helical transmembrane segment at 90 to 112 (LLGTFFTCLVILFACEVAAGIWG) threads the bilayer. Residues 113 to 201 (FVNKDQIAKD…GKIDELFSGK (89 aa)) are Extracellular-facing. 2 disulfide bridges follow: cysteine 156–cysteine 190 and cysteine 157–cysteine 175. Residues 202-224 (LYLIGIAAIVVAVIMIFEMILSM) form a helical membrane-spanning segment. Glutamate 219 contributes to the cholesterol binding site. The Cytoplasmic segment spans residues 225 to 236 (VLCCGIRNSSVY).

The protein belongs to the tetraspanin (TM4SF) family. In terms of assembly, homodimer. Part of a complex composed of CD19, CR2/CD21, CD81 and IFITM1/CD225 in the membrane of mature B cells. Interacts (via the second extracellular domain) with CD19; this interaction is initiated early during biosynthesis in the ER and enables trafficking of only properly folded CD19. Part of a complex that includes MHC class II/HLA-DR molecules and IFITM1. Interacts with IFITM1. Interacts with IFITM2 and IFITM3. Part of integrin-tetraspanin complex composed of CD9, CD81, beta-1 and beta-2 integrins in the membrane of monocyte/macrophages. Interacts (via the second extracellular domain) with integrin ITGAV:ITGB3. Interacts with CD247/CD3 zeta, ICAM1 and CD9 at the immune synapse on T cell membrane. Part of a GPCR-tetraspanin complex consisting at least of ADGRG1, CD81, possibly CD9, and GNA11 in which CD81 enhances the association of ADGRG1 with GNA11. Part of a complex composed of CD9, CD81, PTGFRN and IGSF8. Interacts directly with IGSF8. Interacts with CD53 and SCIMP. Interacts with SAMHD1 (via its C-terminus). Interacts with glypican GPC3 and with the transcriptional repressor HHEX; binding to GPC3 decreases the availability of free CD81 for binding to HHEX, resulting in nuclear translocation of HHEX and transcriptional repression. Interacts with CLDN1. Interacts with CLDN6 and CLDN9. In terms of processing, not glycosylated. Likely constitutively palmitoylated at low levels. Protein palmitoylation is up-regulated upon coligation of BCR and CD9-C2R-CD81 complexes in lipid rafts.

Its subcellular location is the cell membrane. It is found in the basolateral cell membrane. Its function is as follows. Structural component of specialized membrane microdomains known as tetraspanin-enriched microdomains (TERMs), which act as platforms for receptor clustering and signaling. Essential for trafficking and compartmentalization of CD19 receptor on the surface of activated B cells. Upon initial encounter with microbial pathogens, enables the assembly of CD19-CR2/CD21 and B cell receptor (BCR) complexes at signaling TERMs, lowering the threshold dose of antigen required to trigger B cell clonal expansion and antibody production. In T cells, facilitates the localization of CD247/CD3 zeta at antigen-induced synapses with B cells, providing for costimulation and polarization toward T helper type 2 phenotype. Present in MHC class II compartments, may also play a role in antigen presentation. Can act both as positive and negative regulator of homotypic or heterotypic cell-cell fusion processes. Positively regulates sperm-egg fusion and may be involved in acrosome reaction. In myoblasts, associates with CD9 and PTGFRN and inhibits myotube fusion during muscle regeneration. In macrophages, associates with CD9 and beta-1 and beta-2 integrins, and prevents macrophage fusion into multinucleated giant cells specialized in ingesting complement-opsonized large particles. Also prevents the fusion of mononuclear cell progenitors into osteoclasts in charge of bone resorption. May regulate the compartmentalization of enzymatic activities. In T cells, defines the subcellular localization of dNTPase SAMHD1 and permits its degradation by the proteasome, thereby controlling intracellular dNTP levels. Also involved in cell adhesion and motility. Positively regulates integrin-mediated adhesion of macrophages, particularly relevant for the inflammatory response in the lung. The sequence is that of CD81 antigen (CD81) from Bos taurus (Bovine).